The following is a 1087-amino-acid chain: Transcription factor AP2-Z (1087 aa).

A DNA-binding region (AP2) is located at residues 586-682 (GRVYKVIVRG…IKYNSVPDSL (97 aa)).

This sequence belongs to the AP2/ERF transcription factor family. AP2 subfamily.

Its subcellular location is the nucleus. It is found in the chromosome. Transcription factor which binds the 5'-[TC][AC]TG[AT]AC[AG]-3' motif. During the mosquito vector stage, plays an essential role in the zygote for de novo transcription of genes required for ookinete formation. This Plasmodium berghei (strain Anka) protein is Transcription factor AP2-Z.